Here is a 513-residue protein sequence, read N- to C-terminus: Noroxomaritidine synthase 2 (513 aa).

Residues 14–34 (HYPEILIAIACFLIFSLLLSA) traverse the membrane as a helical segment. Heme is bound at residue Cys458.

The protein belongs to the cytochrome P450 family. It depends on heme as a cofactor. Mostly expressed in stems, and, to a lower extent, in bulbs, roots, leaves and flowers.

Its subcellular location is the membrane. It carries out the reaction 4'-O-methylnorbelladine + reduced [NADPH--hemoprotein reductase] + O2 = (10bR,4aS)-noroxomaritidine + oxidized [NADPH--hemoprotein reductase] + 2 H2O + H(+). The catalysed reaction is 4'-O-methylnorbelladine + reduced [NADPH--hemoprotein reductase] + O2 = (10bS,4aR)-noroxomaritidine + oxidized [NADPH--hemoprotein reductase] + 2 H2O + H(+). It participates in alkaloid biosynthesis. Cytochrome P450 that catalyzes an intramolecular para-para' C-C phenol coupling of 4'-O-methylnorbelladine in alkaloids biosynthesis, including haemanthamine- and crinamine-type alkaloids, promising anticancer agents. Catalyzes the formation of (10bR,4aS)-noroxomaritidine and (10bS,4aR)-noroxomaritidine from 4'-O-methylnorbelladine. The chain is Noroxomaritidine synthase 2 from Narcissus pseudonarcissus (Daffodil).